The chain runs to 446 residues: Na(+)-translocating NADH-quinone reductase subunit A (446 aa).

The protein belongs to the NqrA family. As to quaternary structure, composed of six subunits; NqrA, NqrB, NqrC, NqrD, NqrE and NqrF.

The catalysed reaction is a ubiquinone + n Na(+)(in) + NADH + H(+) = a ubiquinol + n Na(+)(out) + NAD(+). Functionally, NQR complex catalyzes the reduction of ubiquinone-1 to ubiquinol by two successive reactions, coupled with the transport of Na(+) ions from the cytoplasm to the periplasm. NqrA to NqrE are probably involved in the second step, the conversion of ubisemiquinone to ubiquinol. In Histophilus somni (strain 129Pt) (Haemophilus somnus), this protein is Na(+)-translocating NADH-quinone reductase subunit A.